Consider the following 128-residue polypeptide: Large ribosomal subunit protein bL19 (128 aa).

The protein belongs to the bacterial ribosomal protein bL19 family.

In terms of biological role, this protein is located at the 30S-50S ribosomal subunit interface and may play a role in the structure and function of the aminoacyl-tRNA binding site. This is Large ribosomal subunit protein bL19 from Azoarcus sp. (strain BH72).